A 315-amino-acid chain; its full sequence is Tyrosine--tRNA ligase (315 aa).

An L-tyrosine-binding site is contributed by Tyr32. A 'HIGH' region motif is present at residues 37 to 45 (PSGEIHLGH). Tyr152, Gln156, Asp159, and Gln174 together coordinate L-tyrosine. A 'KMSKS' region motif is present at residues 208–212 (KMSSS). ATP is bound at residue Ser211.

Belongs to the class-I aminoacyl-tRNA synthetase family. TyrS type 3 subfamily. In terms of assembly, homodimer.

The protein localises to the cytoplasm. It catalyses the reaction tRNA(Tyr) + L-tyrosine + ATP = L-tyrosyl-tRNA(Tyr) + AMP + diphosphate + H(+). Functionally, catalyzes the attachment of tyrosine to tRNA(Tyr) in a two-step reaction: tyrosine is first activated by ATP to form Tyr-AMP and then transferred to the acceptor end of tRNA(Tyr). The sequence is that of Tyrosine--tRNA ligase from Methanoculleus marisnigri (strain ATCC 35101 / DSM 1498 / JR1).